The following is a 332-amino-acid chain: Adenosine receptor A2b (332 aa).

At 1–8 (MPLEAQDA) the chain is on the extracellular side. Residues 9 to 33 (VYVALELALAALSVTGNVLVCAAVG) form a helical membrane-spanning segment. The Cytoplasmic portion of the chain corresponds to 34–43 (TSSALQTPTN). A helical membrane pass occupies residues 44–67 (YFLVSLAAADVAVGLFAIPFAVTI). Over 68 to 78 (SLGFCTDFHSC) the chain is Extracellular. Cys-78 and Cys-170 are oxidised to a cystine. The chain crosses the membrane as a helical span at residues 79–101 (LFLACFVLVLTQSSIFSLLAVAV). At 102–121 (DRYLAVRVPLRYKSLVTGAR) the chain is on the cytoplasmic side. A helical transmembrane segment spans residues 122 to 144 (ARGVIAALWVLAFGIGLTPFLGW). Over 145-177 (NDRKIATNCTEPGDAATNVSCCLIRCLFENVVP) the chain is Extracellular. N-linked (GlcNAc...) asparagine glycans are attached at residues Asn-152 and Asn-162. Glu-173 contacts adenosine. A helical membrane pass occupies residues 178–202 (MSYMVYFNFFGCVLPPLLIMLVIYV). Topologically, residues 203-234 (KIFLVACRQLQRTELMDHSRTVLQREIHAAKS) are cytoplasmic. The helical transmembrane segment at 235-258 (LALIVGIFALCWLPVHTINCASLF) threads the bilayer. An adenosine-binding site is contributed by Asn-253. The Extracellular segment spans residues 259 to 266 (QPTWAKVK). Residues 267-290 (PKWAINTAILLSHANSAVNPIVYA) form a helical membrane-spanning segment. Adenosine-binding residues include Ser-278 and His-279. The Cytoplasmic portion of the chain corresponds to 291-332 (YRNRDFRYTFHKIISRYILCRTHILKSGEGQVGSQPTLQLGL). The S-palmitoyl cysteine moiety is linked to residue Cys-310.

The protein belongs to the G-protein coupled receptor 1 family.

It localises to the cell membrane. In terms of biological role, receptor for adenosine. The activity of this receptor is mediated by G proteins which activate adenylyl cyclase. The polypeptide is Adenosine receptor A2b (ADORA2B) (Bos taurus (Bovine)).